Here is a 1350-residue protein sequence, read N- to C-terminus: ABC transporter C family member 13 (1350 aa).

The region spanning Asn107 to Gly390 is the ABC transmembrane type-1 1 domain. 4 helical membrane passes run Ile111–Phe131, Thr143–Leu163, Ile215–Gln235, and Leu240–Ile260. Residues Glu462–Asn481 are disordered. The segment covering Thr470–Asn481 has biased composition (low complexity). Residues Thr473–Lys693 enclose the ABC transporter 1 domain. Gly505–Thr512 is a binding site for ATP. The 288-residue stretch at Lys774–Ser1061 folds into the ABC transmembrane type-1 2 domain. 6 helical membrane-spanning segments follow: residues Gly776 to Phe796, Asp816 to Ile836, Ile887 to Phe907, Ile909 to Val929, Ile1003 to Leu1023, and Gly1029 to Val1049. An ABC transporter 2 domain is found at Ile1103–Lys1337. Gly1137–Ser1144 contributes to the ATP binding site.

This sequence belongs to the ABC transporter superfamily. ABCC family. Conjugate transporter (TC 3.A.1.208) subfamily.

The protein resides in the membrane. This chain is ABC transporter C family member 13 (abcC13), found in Dictyostelium discoideum (Social amoeba).